The chain runs to 138 residues: Cysteine desulfuration protein SufE (138 aa).

Residue C51 is the Cysteine persulfide intermediate of the active site.

This sequence belongs to the SufE family. As to quaternary structure, homodimer. Interacts with SufS.

It is found in the cytoplasm. Its pathway is cofactor biosynthesis; iron-sulfur cluster biosynthesis. Participates in cysteine desulfuration mediated by SufS. Cysteine desulfuration mobilizes sulfur from L-cysteine to yield L-alanine and constitutes an essential step in sulfur metabolism for biosynthesis of a variety of sulfur-containing biomolecules. Functions as a sulfur acceptor for SufS, by mediating the direct transfer of the sulfur atom from the S-sulfanylcysteine of SufS, an intermediate product of cysteine desulfuration process. The sequence is that of Cysteine desulfuration protein SufE from Escherichia coli O81 (strain ED1a).